The following is a 126-amino-acid chain: Nascent polypeptide-associated complex protein (126 aa).

In terms of domain architecture, NAC-A/B spans proline 10–lysine 77.

This sequence belongs to the NAC-alpha family. Homodimer. Interacts with the ribosome. Binds ribosomal RNA.

Functionally, contacts the emerging nascent chain on the ribosome. The protein is Nascent polypeptide-associated complex protein of Methanococcus maripaludis (strain C6 / ATCC BAA-1332).